The primary structure comprises 122 residues: Large ribosomal subunit protein uL18 (122 aa).

Residues 1–21 show a composition bias toward basic residues; sequence MSKLSRKQQTQKRHRRLRRHL. The interval 1–26 is disordered; it reads MSKLSRKQQTQKRHRRLRRHLTGTSD.

The protein belongs to the universal ribosomal protein uL18 family. Part of the 50S ribosomal subunit; part of the 5S rRNA/L5/L18/L25 subcomplex. Contacts the 5S and 23S rRNAs.

Its function is as follows. This is one of the proteins that bind and probably mediate the attachment of the 5S RNA into the large ribosomal subunit, where it forms part of the central protuberance. This Parasynechococcus marenigrum (strain WH8102) protein is Large ribosomal subunit protein uL18.